Reading from the N-terminus, the 386-residue chain is Probable Xaa-Pro aminopeptidase PMAA_074180 (386 aa).

Residues Asp-160, Asp-171, Glu-311, and Glu-350 each coordinate Mn(2+).

This sequence belongs to the peptidase M24B family. It depends on Mn(2+) as a cofactor.

It carries out the reaction Release of any N-terminal amino acid, including proline, that is linked to proline, even from a dipeptide or tripeptide.. Its function is as follows. Catalyzes the removal of a penultimate prolyl residue from the N-termini of peptides. The chain is Probable Xaa-Pro aminopeptidase PMAA_074180 from Talaromyces marneffei (strain ATCC 18224 / CBS 334.59 / QM 7333) (Penicillium marneffei).